Consider the following 38-residue polypeptide: Odorant-binding protein 2 (38 aa).

This sequence belongs to the calycin superfamily. Lipocalin family. In terms of tissue distribution, nasal mucosa.

It is found in the secreted. It localises to the extracellular space. In terms of biological role, this soluble protein may play a specific role in odor discrimination and perception. This Hystrix cristata (North African crested porcupine) protein is Odorant-binding protein 2.